The chain runs to 74 residues: NADH dehydrogenase [ubiquinone] 1 alpha subcomplex assembly factor 8 (74 aa).

Positions 22–69 constitute a CHCH domain; the sequence is LAACGAEAAAYGRCVQASTAPGGRLSKDFCAREFEALRSCFAAAAKKT. 2 consecutive short sequence motifs (cx9C motif) follow at residues 25–35 and 51–61; these read CGAEAAAYGRC and CAREFEALRSC. Disulfide bonds link cysteine 25–cysteine 61 and cysteine 35–cysteine 51.

Interacts with NDUFAF5.

The protein resides in the mitochondrion. In terms of biological role, involved in the assembly of mitochondrial NADH:ubiquinone oxidoreductase complex (complex I, MT-ND1). Required to stabilize NDUFAF5. The polypeptide is NADH dehydrogenase [ubiquinone] 1 alpha subcomplex assembly factor 8 (Homo sapiens (Human)).